Here is a 158-residue protein sequence, read N- to C-terminus: Transcription elongation factor GreA (158 aa).

Residues 41–61 (GDLSENAEYHAAKEDQSHNEG) are disordered. Positions 51–74 (AAKEDQSHNEGRIAELEDKLARAE) form a coiled coil.

Belongs to the GreA/GreB family.

Functionally, necessary for efficient RNA polymerase transcription elongation past template-encoded arresting sites. The arresting sites in DNA have the property of trapping a certain fraction of elongating RNA polymerases that pass through, resulting in locked ternary complexes. Cleavage of the nascent transcript by cleavage factors such as GreA or GreB allows the resumption of elongation from the new 3'terminus. GreA releases sequences of 2 to 3 nucleotides. The protein is Transcription elongation factor GreA of Nitrobacter hamburgensis (strain DSM 10229 / NCIMB 13809 / X14).